The primary structure comprises 156 residues: ATP synthase subunit b (156 aa).

A helical transmembrane segment spans residues 7 to 29; sequence LLGQAISFGMFVWFCMKYVWPPI.

This sequence belongs to the ATPase B chain family. F-type ATPases have 2 components, F(1) - the catalytic core - and F(0) - the membrane proton channel. F(1) has five subunits: alpha(3), beta(3), gamma(1), delta(1), epsilon(1). F(0) has three main subunits: a(1), b(2) and c(10-14). The alpha and beta chains form an alternating ring which encloses part of the gamma chain. F(1) is attached to F(0) by a central stalk formed by the gamma and epsilon chains, while a peripheral stalk is formed by the delta and b chains.

The protein resides in the cell inner membrane. F(1)F(0) ATP synthase produces ATP from ADP in the presence of a proton or sodium gradient. F-type ATPases consist of two structural domains, F(1) containing the extramembraneous catalytic core and F(0) containing the membrane proton channel, linked together by a central stalk and a peripheral stalk. During catalysis, ATP synthesis in the catalytic domain of F(1) is coupled via a rotary mechanism of the central stalk subunits to proton translocation. Its function is as follows. Component of the F(0) channel, it forms part of the peripheral stalk, linking F(1) to F(0). This Vibrio cholerae serotype O1 (strain ATCC 39541 / Classical Ogawa 395 / O395) protein is ATP synthase subunit b.